A 37-amino-acid polypeptide reads, in one-letter code: Potassium channel toxin alpha-KTx 4.8 (37 aa).

Intrachain disulfides connect C13/C33 and C17/C35.

The protein belongs to the short scorpion toxin superfamily. Potassium channel inhibitor family. Alpha-KTx 04 subfamily. Expressed by the venom gland.

It is found in the secreted. In terms of biological role, reversible blocker of voltage-gated potassium channel Kv1.2/KCNA2 (Kd=65 nM) and calcium-activated potassium channels KCa2.2/KCNN2 (Kd=575 nM) and KCa3.1/KCNN4 (Kd=59 nM). This is Potassium channel toxin alpha-KTx 4.8 from Centruroides margaritatus (Central American bark Scorpion).